A 664-amino-acid polypeptide reads, in one-letter code: DNA ligase (664 aa).

NAD(+) is bound by residues 30-34 (DFEFD), 79-80 (SL), and E109. The N6-AMP-lysine intermediate role is filled by K111. NAD(+) is bound by residues R132, E169, K284, and K308. 4 residues coordinate Zn(2+): C403, C406, C421, and C427. The BRCT domain occupies 586 to 664 (NRSEKLKGLT…NEDAFLNMLE (79 aa)).

This sequence belongs to the NAD-dependent DNA ligase family. LigA subfamily. It depends on Mg(2+) as a cofactor. Mn(2+) is required as a cofactor.

It carries out the reaction NAD(+) + (deoxyribonucleotide)n-3'-hydroxyl + 5'-phospho-(deoxyribonucleotide)m = (deoxyribonucleotide)n+m + AMP + beta-nicotinamide D-nucleotide.. Its function is as follows. DNA ligase that catalyzes the formation of phosphodiester linkages between 5'-phosphoryl and 3'-hydroxyl groups in double-stranded DNA using NAD as a coenzyme and as the energy source for the reaction. It is essential for DNA replication and repair of damaged DNA. This is DNA ligase from Parabacteroides distasonis (strain ATCC 8503 / DSM 20701 / CIP 104284 / JCM 5825 / NCTC 11152).